The chain runs to 267 residues: V-type proton ATPase subunit D (267 aa).

The protein belongs to the V-ATPase D subunit family. V-ATPase is a heteromultimeric enzyme composed of a peripheral catalytic V1 complex (components A to H) attached to an integral membrane V0 proton pore complex (components: a, c, c', c'', d, e, f and VOA1).

The protein localises to the vacuole membrane. In terms of biological role, subunit of the V1 complex of vacuolar(H+)-ATPase (V-ATPase), a multisubunit enzyme composed of a peripheral complex (V1) that hydrolyzes ATP and a membrane integral complex (V0) that translocates protons. V-ATPase is responsible for acidifying and maintaining the pH of intracellular compartments. The chain is V-type proton ATPase subunit D (VMA8) from Candida albicans (strain SC5314 / ATCC MYA-2876) (Yeast).